A 663-amino-acid polypeptide reads, in one-letter code: DNA topoisomerase 4 subunit B (663 aa).

ATP is bound by residues Tyr7, Asn47, Asp74, Gly114–Ala120, and Lys341. Positions Arg386 to Ala416 are disordered. Residues Glu387–Ser398 show a composition bias toward basic and acidic residues. The region spanning Asn424–Pro538 is the Toprim domain. Residues Glu430, Asp503, and Asp505 each contribute to the Mg(2+) site.

This sequence belongs to the type II topoisomerase family. ParE type 2 subfamily. As to quaternary structure, heterotetramer composed of ParC and ParE. The cofactor is Mg(2+). It depends on Mn(2+) as a cofactor. Ca(2+) is required as a cofactor.

It carries out the reaction ATP-dependent breakage, passage and rejoining of double-stranded DNA.. Its function is as follows. Topoisomerase IV is essential for chromosome segregation. It relaxes supercoiled DNA. Performs the decatenation events required during the replication of a circular DNA molecule. This is DNA topoisomerase 4 subunit B from Staphylococcus aureus (strain NCTC 8325 / PS 47).